A 1103-amino-acid chain; its full sequence is Ataxin-2 homolog (1103 aa).

Basic residues predominate over residues 1 to 10; the sequence is MSQSKDKKKF. The interval 1-75 is disordered; the sequence is MSQSKDKKKF…QQQQQQQQPF (75 aa). Residues 11-28 are compositionally biased toward gly residues; sequence VGGGGGGGGNNSGGGGYG. 2 stretches are compositionally biased toward low complexity: residues 33-44 and 56-73; these read NNNNNNRNSSNN and HHQQ…QQQQ. Positions 84 to 166 constitute a Sm domain; sequence RTVFMSMSLV…FLQITATGVV (83 aa). Positions 258 to 287 form a coiled coil; the sequence is EFYKINQSVAEKKAQEIENEKSGNIHLLEE. Disordered regions lie at residues 305–474, 516–557, 615–763, 901–920, and 930–1103; these read VVRK…RESP, TNKS…APKS, LVIK…NNTT, HTMK…VQPQ, and QPQG…NQYH. Residues 312-356 show a composition bias toward low complexity; the sequence is PTSTTSTTTSPPTQNPTPSSSVYIPPSKRNNNNNTPSTPSVTSPP. Residues 358–371 show a composition bias toward basic and acidic residues; sequence VDKKHQQTHQDKKQ. Residues 366-403 adopt a coiled-coil conformation; the sequence is HQDKKQTQQQQQQQQQQQQQQQQQQQQQQQQQQQQQTQ. The span at 372 to 463 shows a compositional bias: low complexity; sequence TQQQQQQQQQ…NNTPTATNTN (92 aa). Over residues 516–529 the composition is skewed to polar residues; the sequence is TNKSMNKSGSNIST. Composition is skewed to low complexity over residues 530-544, 637-676, and 683-694; these read TPVN…NGTP, PTQL…TPST, and TTTPITTTILTE. Residues 691-730 are a coiled coil; sequence ILTENKSDDKEKEKEKEKEKVDEKEKEKEKEKSDEKDKDQ. A compositionally biased stretch (basic and acidic residues) spans 695-741; the sequence is NKSDDKEKEKEKEKEKVDEKEKEKEKEKSDEKDKDQSSTLVEKKDES. Positions 742–763 are enriched in low complexity; that stretch reads SSSSNTTTTTTNTTNNNNNNTT. Over residues 930–957 the composition is skewed to low complexity; sequence QPQGGVVQPSAGGAPKTMYQQQQQQQQQ. Residues 960 to 969 are compositionally biased toward gly residues; that stretch reads QPGGPMGVQR. Positions 974–984 are enriched in low complexity; that stretch reads PPQQQPQQQQQ. Pro residues predominate over residues 1020 to 1031; sequence YAVPHPQYPMPP. Over residues 1062-1076 the composition is skewed to low complexity; that stretch reads QVVSQNSPQQDSPSN.

The protein belongs to the ataxin-2 family.

This Dictyostelium discoideum (Social amoeba) protein is Ataxin-2 homolog (atxn2).